Here is a 130-residue protein sequence, read N- to C-terminus: Lysozyme C (130 aa).

Residues 1–130 form the C-type lysozyme domain; sequence KTYERCELAR…VSPWIRDCGL (130 aa). Intrachain disulfides connect Cys6-Cys128, Cys30-Cys116, Cys65-Cys81, and Cys77-Cys95. Active-site residues include Glu35 and Asp53.

Belongs to the glycosyl hydrolase 22 family. Monomer.

It is found in the secreted. It catalyses the reaction Hydrolysis of (1-&gt;4)-beta-linkages between N-acetylmuramic acid and N-acetyl-D-glucosamine residues in a peptidoglycan and between N-acetyl-D-glucosamine residues in chitodextrins.. In terms of biological role, lysozymes have primarily a bacteriolytic function; those in tissues and body fluids are associated with the monocyte-macrophage system and enhance the activity of immunoagents. This is Lysozyme C (LYZ) from Chelonia mydas (Green sea-turtle).